The sequence spans 241 residues: Small ribosomal subunit protein bS6 (241 aa).

Residues 97–108 (KPKIRERNRKYT) are compositionally biased toward basic residues. Disordered regions lie at residues 97 to 187 (KPKI…HREN) and 199 to 241 (NKNH…QSSN). Over residues 109-118 (PRRDRFDKPN) the composition is skewed to basic and acidic residues. Composition is skewed to low complexity over residues 130-151 (QDQQ…QTSQ), 161-180 (DDFQ…QQNQ), and 199-210 (NKNHQNQTSQTQ).

The protein belongs to the bacterial ribosomal protein bS6 family.

Binds together with bS18 to 16S ribosomal RNA. This Mesomycoplasma hyopneumoniae (strain 7448) (Mycoplasma hyopneumoniae) protein is Small ribosomal subunit protein bS6.